The primary structure comprises 1612 residues: DNA topoisomerase 2-beta (1612 aa).

Ala2 bears the N-acetylalanine mark. An N6-acetyllysine modification is found at Lys3. Residues Lys21 and Lys22 each participate in a glycyl lysine isopeptide (Lys-Gly) (interchain with G-Cter in SUMO2) cross-link. Residues Asn100, Asn129, and 157–159 each bind ATP; that span reads SSN. Glycyl lysine isopeptide (Lys-Gly) (interchain with G-Cter in SUMO2) cross-links involve residues Lys165 and Lys166. 170 to 177 contacts ATP; the sequence is GRNGYGAK. Glycyl lysine isopeptide (Lys-Gly) (interchain with G-Cter in SUMO2) cross-links involve residues Lys216 and Lys287. The interval 351 to 353 is interaction with DNA; sequence KKK. Glycyl lysine isopeptide (Lys-Gly) (interchain with G-Cter in SUMO2) cross-links involve residues Lys355 and Lys361. Position 385-387 (385-387) interacts with ATP; it reads QTK. Glycyl lysine isopeptide (Lys-Gly) (interchain with G-Cter in SUMO2) cross-links involve residues Lys425, Lys427, and Lys434. Positions 464-581 constitute a Toprim domain; the sequence is CTLILTEGDS…SLLKHGFLEE (118 aa). Positions 470, 550, and 552 each coordinate Mg(2+). Glycyl lysine isopeptide (Lys-Gly) (interchain with G-Cter in SUMO2) cross-links involve residues Lys588, Lys593, Lys623, Lys631, Lys634, Lys664, and Lys700. The Topo IIA-type catalytic domain occupies 724–1177; that stretch reads IPSLVDGFKP…SPSDLWKEDL (454 aa). Tyr814 serves as the catalytic O-(5'-phospho-DNA)-tyrosine intermediate. The interval 999 to 1008 is interaction with DNA; it reads KLQTTLTCNS. Residue Lys1080 forms a Glycyl lysine isopeptide (Lys-Gly) (interchain with G-Cter in SUMO2) linkage. Positions 1098–1128 are disordered; the sequence is AWKEAQEKAAEEEDSQNQHDDSSSDSGTPSG. Residues Lys1202, Lys1205, Lys1214, and Lys1215 each participate in a glycyl lysine isopeptide (Lys-Gly) (interchain with G-Cter in SUMO2) cross-link. Position 1224 is a phosphoserine (Ser1224). Residues Lys1238, Lys1250, and Lys1259 each participate in a glycyl lysine isopeptide (Lys-Gly) (interchain with G-Cter in SUMO2) cross-link. The tract at residues 1245–1586 is disordered; it reads LLKKKKGDPD…FTSEPPALPR (342 aa). Thr1280 is subject to Phosphothreonine. Glycyl lysine isopeptide (Lys-Gly) (interchain with G-Cter in SUMO2) cross-links involve residues Lys1311 and Lys1315. 2 stretches are compositionally biased toward basic and acidic residues: residues 1322 to 1332 and 1346 to 1358; these read PWSDDESKSES and SLLRRAAAERPKY. A phosphoserine mark is found at Ser1324, Ser1328, Ser1330, Ser1332, and Ser1346. Position 1358 is a phosphotyrosine (Tyr1358). The span at 1362 to 1379 shows a compositional bias: acidic residues; sequence FSEEEDDDAAAADDSNDL. 2 positions are modified to phosphoserine: Ser1363 and Ser1376. Residue Lys1385 forms a Glycyl lysine isopeptide (Lys-Gly) (interchain with G-Cter in SUMO2) linkage. The residue at position 1387 (Ser1387) is a Phosphoserine. Thr1390 carries the post-translational modification Phosphothreonine. Phosphoserine is present on Ser1400. Tyr1408 is modified (phosphotyrosine). Ser1411 carries the post-translational modification Phosphoserine. The segment covering 1417–1429 has biased composition (basic and acidic residues); it reads ATPEKSSNDKKSQ. A Glycyl lysine isopeptide (Lys-Gly) (interchain with G-Cter in SUMO2) cross-link involves residue Lys1427. Phosphoserine is present on residues Ser1428, Ser1439, and Ser1441. Lys1443 participates in a covalent cross-link: Glycyl lysine isopeptide (Lys-Gly) (interchain with G-Cter in SUMO2). Residues 1443-1453 are compositionally biased toward basic and acidic residues; sequence KSEDDSAKFDS. Phosphoserine occurs at positions 1448, 1453, and 1460. Residue Lys1477 forms a Glycyl lysine isopeptide (Lys-Gly) (interchain with G-Cter in SUMO2) linkage. The interval 1493-1499 is interaction with PLSCR1; it reads KAKRAPK. Residues Ser1509, Ser1511, and Ser1513 each carry the phosphoserine modification. The segment covering 1526-1536 has biased composition (basic residues); it reads GKGRGAKKRKA. Phosphoserine is present on residues Ser1537 and Ser1539. The span at 1550–1561 shows a compositional bias: basic residues; the sequence is KPSKTASKKPKK. Thr1562 carries the phosphothreonine modification. Phosphoserine occurs at positions 1563 and 1568. A Phosphotyrosine modification is found at Tyr1596. Ser1600 is subject to Phosphoserine.

The protein belongs to the type II topoisomerase family. As to quaternary structure, homodimer. Interacts with KIAA1210. Interacts with PLSCR1. It depends on Mg(2+) as a cofactor. Requires Mn(2+) as cofactor. Ca(2+) is required as a cofactor.

It localises to the nucleus. The protein resides in the nucleolus. Its subcellular location is the nucleoplasm. It carries out the reaction ATP-dependent breakage, passage and rejoining of double-stranded DNA.. Its function is as follows. Key decatenating enzyme that alters DNA topology by binding to two double-stranded DNA molecules, generating a double-stranded break in one of the strands, passing the intact strand through the broken strand, and religating the broken strand. Plays a role in B-cell differentiation. This chain is DNA topoisomerase 2-beta (Top2b), found in Mus musculus (Mouse).